Consider the following 512-residue polypeptide: Cobyric acid synthase (512 aa).

The GATase cobBQ-type domain maps to 254–455; sequence EIDIAVVKLP…LHGLFDNKAL (202 aa). The Nucleophile role is filled by Cys335. His447 is a catalytic residue.

The protein belongs to the CobB/CobQ family. CobQ subfamily.

The protein operates within cofactor biosynthesis; adenosylcobalamin biosynthesis. Its function is as follows. Catalyzes amidations at positions B, D, E, and G on adenosylcobyrinic A,C-diamide. NH(2) groups are provided by glutamine, and one molecule of ATP is hydrogenolyzed for each amidation. The sequence is that of Cobyric acid synthase from Desulforamulus reducens (strain ATCC BAA-1160 / DSM 100696 / MI-1) (Desulfotomaculum reducens).